The primary structure comprises 493 residues: MDYLTIILTLLFALTLYEAFSYLSRRTKNLPPGPSPLPFIGSLHLLGDQPHKSLAKLSKKHGPIMSLKLGQITTIVISSSTMAKEVLQKQDLAFSSRSVPNALHAHNQFKFSVVWLPVASRWRSLRKVLNSNIFSGNRLDANQHLRTRKVQELIAYCRKNSQSGEAVDVGRAAFRTSLNLLSNLIFSKDLTDPYSDSAKEFKDLVWNIMVEAGKPNLVDFFPLLEKVDPQGIRHRMTIHFGEVLKLFGGLVNERLEQRRSKGEKNDVLDVLLTTSQESPEEIDRTHIERMCLDLFVAGTDTTSSTLEWAMSEMLKNPDKMKKTQDELAQVIGRGKTIEESDINRLPYLRCVMKETLRIHPPVPFLIPRKVEQSVEVCGYNVPKGSQVLVNAWAIGRDETVWDDALAFKPERFMESELDIRGRDFELIPFGAGRRICPGLPLALRTVPLMLGSLLNSFNWKLEGGMAPKDLDMEEKFGITLQKAHPLRAVPSTL.

Residues 1-6 (MDYLTI) are Lumenal-facing. A helical transmembrane segment spans residues 7 to 23 (ILTLLFALTLYEAFSYL). Over 24-493 (SRRTKNLPPG…HPLRAVPSTL (470 aa)) the chain is Cytoplasmic. Cysteine 436 is a heme binding site.

The protein belongs to the cytochrome P450 family. The cofactor is heme. In terms of tissue distribution, expressed in roots, stems, leaves and flower buds. Hardly detected in mature flowers and fruits. Expressed in the internal phloem-associated parenchyma.

It is found in the endoplasmic reticulum membrane. The catalysed reaction is (2E)-geraniol + reduced [NADPH--hemoprotein reductase] + O2 = (6E)-8-hydroxygeraniol + oxidized [NADPH--hemoprotein reductase] + H2O + H(+). In terms of biological role, hydroxylase involved in the biosynthesis of hydroxygeraniol, a precursor of the terpenoid indole alkaloids such as vinblastine and vincristine. Also able to hydroxylate in vitro nerol and to catalyze 3'-hydroxylation of the flavanone naringenin to form eriodictyol. No activity with apigenin, kaempferol, p-coumaric acid and ferulic acid as substrates. The protein is Geraniol 8-hydroxylase (CYP76B6) of Catharanthus roseus (Madagascar periwinkle).